The sequence spans 46 residues: Iota-conotoxin-like M11.1 (46 aa).

Cystine bridges form between C5–C19, C12–C22, C18–C27, and C21–C38. M44 carries the D-methionine modification. A propeptide (removed by a carboxypeptidase) is located at residue R46.

It belongs to the conotoxin I1 superfamily. Expressed by the venom duct.

The protein resides in the secreted. Functionally, iota-conotoxins bind to voltage-gated sodium channels (Nav) and act as agonists by shifting the voltage-dependence of activation to more hyperpolarized levels. Produces general excitatory symptoms. This Conus magus (Magical cone) protein is Iota-conotoxin-like M11.1.